Consider the following 256-residue polypeptide: tRNA pseudouridine synthase A (256 aa).

The Nucleophile role is filled by aspartate 49. Tyrosine 104 lines the substrate pocket.

Belongs to the tRNA pseudouridine synthase TruA family.

The enzyme catalyses uridine(38/39/40) in tRNA = pseudouridine(38/39/40) in tRNA. In terms of biological role, formation of pseudouridine at positions 38, 39 and 40 in the anticodon stem and loop of transfer RNAs. In Methanopyrus kandleri (strain AV19 / DSM 6324 / JCM 9639 / NBRC 100938), this protein is tRNA pseudouridine synthase A.